The following is a 268-amino-acid chain: Myeloid leukemia factor 1 (268 aa).

Phosphoserine is present on residues serine 8, serine 32, and serine 34. 2 disordered regions span residues 44–66 (ISDG…SLTH) and 209–268 (GRHN…SNKK). Positions 50–125 (RAHNRRGHND…IGDEPPKVFQ (76 aa)) are interaction with COPS3. Composition is skewed to basic and acidic residues over residues 56 to 65 (GHNDGEDSLT) and 226 to 237 (PGSRELKRREKP).

Belongs to the MLF family. As to quaternary structure, interacts with CENPU. Also interacts with NRBP1/MADM, YWHAZ/14-3-3-zeta and HNRPUL2/MANP. NRBP1 recruits a serine kinase which phosphorylates both itself and MLF1. Phosphorylated MLF1 then binds to YWHAZ and is retained in the cytoplasm. Retained in the nucleus by binding to HNRPUL2. Binds to COPS3/CSN3 which is required for suppression of COP1 and activation of p53. Phosphorylation is required for binding to YWHAZ. Most abundant in testis, ovary, skeletal muscle, heart, kidney and colon. Low expression in spleen, thymus and peripheral blood leukocytes.

Its subcellular location is the cytoplasm. It localises to the nucleus. The protein resides in the cell projection. The protein localises to the cilium. It is found in the cytoskeleton. Its subcellular location is the cilium basal body. Its function is as follows. Involved in lineage commitment of primary hemopoietic progenitors by restricting erythroid formation and enhancing myeloid formation. Interferes with erythropoietin-induced erythroid terminal differentiation by preventing cells from exiting the cell cycle through suppression of CDKN1B/p27Kip1 levels. Suppresses COP1 activity via CSN3 which activates p53 and induces cell cycle arrest. Binds DNA and affects the expression of a number of genes so may function as a transcription factor in the nucleus. The protein is Myeloid leukemia factor 1 (MLF1) of Homo sapiens (Human).